Here is a 452-residue protein sequence, read N- to C-terminus: GATA-binding factor 2 (452 aa).

The disordered stretch occupies residues 130–182 (GGSLYPGTGSSACPSSSHSSPHLFGFPPTPPKDVSPDPGPASPPSSSRLEDKD). Low complexity predominate over residues 139–151 (SSACPSSSHSSPH). The span at 156–172 (PPTPPKDVSPDPGPASP) shows a compositional bias: pro residues. 2 GATA-type zinc fingers span residues 267–291 (CVNC…CNAC) and 321–345 (CANC…CNAC). A compositionally biased stretch (polar residues) spans 426-438 (QTPTPIHPSSSLS). Positions 426–452 (QTPTPIHPSSSLSFGHPHHSSMVTAMG) are disordered.

In terms of tissue distribution, expressed in the developing ventral blood island, and in the embryonic nervous system.

The protein resides in the nucleus. In Xenopus laevis (African clawed frog), this protein is GATA-binding factor 2 (gata2).